The following is a 403-amino-acid chain: Creatinase (403 aa).

Residue histidine 232 is part of the active site.

It belongs to the peptidase M24 family. Creatinase subfamily. Homodimer.

It catalyses the reaction creatine + H2O = sarcosine + urea. This chain is Creatinase, found in Pseudomonas putida (Arthrobacter siderocapsulatus).